We begin with the raw amino-acid sequence, 337 residues long: Leucine-rich repeat-containing protein 39 (337 aa).

9 LRR repeats span residues 84–105 (QLQE…IGRF), 107–128 (HLIV…IGLL), 130–152 (RLQE…SNCT), 153–176 (SLEK…SKLL), 177–198 (KLTH…VLDM), 200–221 (ALEW…LDRM), 223–244 (SLHT…IKNM), 246–267 (NLGT…MEEM), and 269–290 (NLRF…PPSD).

Interacts with MYH7 (via C-terminus). In terms of tissue distribution, expressed in heart and skeletal muscle.

It localises to the cytoplasm. The protein resides in the myofibril. The protein localises to the sarcomere. Its subcellular location is the m line. Functionally, component of the sarcomeric M-band which plays a role in myocyte response to biomechanical stress. May regulate expression of other M-band proteins via an SRF-dependent pathway. Important for normal contractile function in heart. This is Leucine-rich repeat-containing protein 39 from Mus musculus (Mouse).